The primary structure comprises 915 residues: DNA repair-scaffolding protein (915 aa).

The segment covering 1-15 (MPRGSRARGSKRKRS) has biased composition (basic residues). 2 disordered regions span residues 1–30 (MPRGSRARGSKRKRSWNTECPSFPGERPLQ) and 56–114 (FQNT…EDKT). Positions 56-65 (FQNTSGNPSL) are enriched in polar residues. The segment covering 67 to 85 (AEEKTITEKHLELCPRPKQ) has biased composition (basic and acidic residues). The segment covering 86 to 107 (ETTTSKSTSGLTDITWSSSGSD) has biased composition (polar residues). The segment at 151-450 (EISDCASCAS…GTAWTHGHKE (300 aa)) is necessary for interaction with RAD51.

As to quaternary structure, found in a complex, at least composed of BLM, RAD51 and SPIDR; the complex formation is mediated by SPIDR. Interacts (via C-terminal region) with BLM; the interaction is direct. Interacts with RAD51; the interaction is direct. Interacts (via the C-terminal region) with FIGNL1 (via N-terminal one-half region); the interaction is direct.

It is found in the nucleus. Plays a role in DNA double-strand break (DBS) repair via homologous recombination (HR). Serves as a scaffolding protein that helps to promote the recruitment of DNA-processing enzymes like the helicase BLM and recombinase RAD51 to site of DNA damage, and hence contributes to maintain genomic integrity. This chain is DNA repair-scaffolding protein (SPIDR), found in Homo sapiens (Human).